A 394-amino-acid chain; its full sequence is Elongation factor Tu 2 (394 aa).

One can recognise a tr-type G domain in the interval Lys-10–Glu-204. A G1 region spans residues Gly-19–Thr-26. Position 19–26 (Gly-19–Thr-26) interacts with GTP. Residue Thr-26 coordinates Mg(2+). Positions Gly-60–Asn-64 are G2. The interval Asp-81–Gly-84 is G3. Residues Asp-81–His-85 and Asn-136–Asp-139 each bind GTP. The tract at residues Asn-136–Asp-139 is G4. A G5 region spans residues Ser-174 to Leu-176.

Belongs to the TRAFAC class translation factor GTPase superfamily. Classic translation factor GTPase family. EF-Tu/EF-1A subfamily. Monomer.

It is found in the cytoplasm. The enzyme catalyses GTP + H2O = GDP + phosphate + H(+). GTP hydrolase that promotes the GTP-dependent binding of aminoacyl-tRNA to the A-site of ribosomes during protein biosynthesis. The polypeptide is Elongation factor Tu 2 (Serratia proteamaculans (strain 568)).